We begin with the raw amino-acid sequence, 316 residues long: Leucine-rich repeat-containing protein 73 (316 aa).

LRR repeat units lie at residues 57 to 78 (SLAQ…KQLA), 86 to 106 (SIQS…ALLN), 114 to 137 (ALVA…CGLL), 145 to 166 (GLKE…SRLA), 174 to 187 (QVRV…PLGD), 202 to 223 (TLEV…TLLD), and 231 to 250 (ALRS…QQQI). The segment at 257–296 (GEEEEEMAGGAADTQEWGRGREPAAHQRGGSSWKCPSDPN) is disordered. The span at 272–281 (EWGRGREPAA) shows a compositional bias: basic and acidic residues.

This chain is Leucine-rich repeat-containing protein 73 (Lrrc73), found in Rattus norvegicus (Rat).